A 156-amino-acid chain; its full sequence is SsrA-binding protein (156 aa).

The protein belongs to the SmpB family.

It is found in the cytoplasm. Its function is as follows. Required for rescue of stalled ribosomes mediated by trans-translation. Binds to transfer-messenger RNA (tmRNA), required for stable association of tmRNA with ribosomes. tmRNA and SmpB together mimic tRNA shape, replacing the anticodon stem-loop with SmpB. tmRNA is encoded by the ssrA gene; the 2 termini fold to resemble tRNA(Ala) and it encodes a 'tag peptide', a short internal open reading frame. During trans-translation Ala-aminoacylated tmRNA acts like a tRNA, entering the A-site of stalled ribosomes, displacing the stalled mRNA. The ribosome then switches to translate the ORF on the tmRNA; the nascent peptide is terminated with the 'tag peptide' encoded by the tmRNA and targeted for degradation. The ribosome is freed to recommence translation, which seems to be the essential function of trans-translation. The protein is SsrA-binding protein of Bacillus velezensis (strain DSM 23117 / BGSC 10A6 / LMG 26770 / FZB42) (Bacillus amyloliquefaciens subsp. plantarum).